Reading from the N-terminus, the 430-residue chain is Cytochrome c biogenesis protein CcsB (430 aa).

A run of 3 helical transmembrane segments spans residues 14–34 (LRIAIGLLLVIALASALGTAI), 72–92 (SSWFLALLAWLGLALILCSWR), and 162–182 (AGPMLVHLGLVLLMLGAVWGS).

This sequence belongs to the Ccs1/CcsB family. As to quaternary structure, may interact with CcsA.

It localises to the cellular thylakoid membrane. Its function is as follows. Required during biogenesis of c-type cytochromes (cytochrome c6 and cytochrome f) at the step of heme attachment. This Prochlorococcus marinus (strain MIT 9313) protein is Cytochrome c biogenesis protein CcsB.